The primary structure comprises 100 residues: Cell division topological specificity factor (100 aa).

This sequence belongs to the MinE family.

Its function is as follows. Prevents the cell division inhibition by proteins MinC and MinD at internal division sites while permitting inhibition at polar sites. This ensures cell division at the proper site by restricting the formation of a division septum at the midpoint of the long axis of the cell. This is Cell division topological specificity factor from Blochmanniella floridana.